A 461-amino-acid polypeptide reads, in one-letter code: 3-isopropylmalate dehydratase large subunit (461 aa).

3 residues coordinate [4Fe-4S] cluster: cysteine 338, cysteine 398, and cysteine 401.

The protein belongs to the aconitase/IPM isomerase family. LeuC type 1 subfamily. Heterodimer of LeuC and LeuD. [4Fe-4S] cluster serves as cofactor.

The enzyme catalyses (2R,3S)-3-isopropylmalate = (2S)-2-isopropylmalate. Its pathway is amino-acid biosynthesis; L-leucine biosynthesis; L-leucine from 3-methyl-2-oxobutanoate: step 2/4. Its function is as follows. Catalyzes the isomerization between 2-isopropylmalate and 3-isopropylmalate, via the formation of 2-isopropylmaleate. The chain is 3-isopropylmalate dehydratase large subunit from Streptococcus mutans serotype c (strain ATCC 700610 / UA159).